The sequence spans 381 residues: uncharacterized protein (381 aa).

The first 16 residues, 1–16 (MQTLLFYFFFINLIFA), serve as a signal peptide directing secretion. At 17-303 (HDLNVKTYKP…KILENSPCPN (287 aa)) the chain is on the lumenal side. Residues Cys-118 and Cys-149 are joined by a disulfide bond. Asn-133, Asn-192, Asn-225, Asn-243, Asn-246, and Asn-287 each carry an N-linked (GlcNAc...) asparagine glycan. The helical transmembrane segment at 304-324 (QPSIQPFGILMMLVSTIYGNF) threads the bilayer. At 325–359 (KNLYNCIKRNTIGYIYNSIYDFWITEGMLFPMRNM) the chain is on the cytoplasmic side. Residues 360–380 (DIFKITAISIGLSIPVFLWLL) form a helical membrane-spanning segment. Lys-381 is a topological domain (lumenal).

The protein belongs to the calreticulin family.

It localises to the endoplasmic reticulum membrane. This is an uncharacterized protein from Schizosaccharomyces pombe (strain 972 / ATCC 24843) (Fission yeast).